A 523-amino-acid chain; its full sequence is 2-isopropylmalate synthase (523 aa).

A Pyruvate carboxyltransferase domain is found at 5–267; it reads VIIFDTTLRD…HTAINHQEIW (263 aa). Residues D14, H202, H204, and N238 each coordinate Mn(2+). A regulatory domain region spans residues 392–523; sequence RLDYFSVQSG…QHNENNKETV (132 aa).

The protein belongs to the alpha-IPM synthase/homocitrate synthase family. LeuA type 1 subfamily. In terms of assembly, homodimer. Requires Mn(2+) as cofactor.

Its subcellular location is the cytoplasm. It catalyses the reaction 3-methyl-2-oxobutanoate + acetyl-CoA + H2O = (2S)-2-isopropylmalate + CoA + H(+). The protein operates within amino-acid biosynthesis; L-leucine biosynthesis; L-leucine from 3-methyl-2-oxobutanoate: step 1/4. Its function is as follows. Catalyzes the condensation of the acetyl group of acetyl-CoA with 3-methyl-2-oxobutanoate (2-ketoisovalerate) to form 3-carboxy-3-hydroxy-4-methylpentanoate (2-isopropylmalate). The polypeptide is 2-isopropylmalate synthase (Escherichia coli O45:K1 (strain S88 / ExPEC)).